Reading from the N-terminus, the 188-residue chain is Elongation factor P (188 aa).

It belongs to the elongation factor P family.

The protein localises to the cytoplasm. The protein operates within protein biosynthesis; polypeptide chain elongation. In terms of biological role, involved in peptide bond synthesis. Stimulates efficient translation and peptide-bond synthesis on native or reconstituted 70S ribosomes in vitro. Probably functions indirectly by altering the affinity of the ribosome for aminoacyl-tRNA, thus increasing their reactivity as acceptors for peptidyl transferase. This chain is Elongation factor P, found in Stutzerimonas stutzeri (strain A1501) (Pseudomonas stutzeri).